Here is a 128-residue protein sequence, read N- to C-terminus: Translation initiation factor 5A (128 aa).

The residue at position 35 (Lys35) is a Hypusine.

It belongs to the eIF-5A family.

It localises to the cytoplasm. Functionally, functions by promoting the formation of the first peptide bond. The polypeptide is Translation initiation factor 5A (eif5a) (Archaeoglobus fulgidus (strain ATCC 49558 / DSM 4304 / JCM 9628 / NBRC 100126 / VC-16)).